A 517-amino-acid polypeptide reads, in one-letter code: Crotonobetaine/carnitine--CoA ligase (517 aa).

It belongs to the ATP-dependent AMP-binding enzyme family.

The enzyme catalyses 4-(trimethylamino)butanoate + ATP + CoA = 4-(trimethylamino)butanoyl-CoA + AMP + diphosphate. It catalyses the reaction crotonobetaine + ATP + CoA = crotonobetainyl-CoA + AMP + diphosphate. It carries out the reaction (R)-carnitine + ATP + CoA = (R)-carnitinyl-CoA + AMP + diphosphate. The protein operates within amine and polyamine metabolism; carnitine metabolism. Its function is as follows. Catalyzes the transfer of CoA to carnitine, generating the initial carnitinyl-CoA needed for the CaiB reaction cycle. Also has activity toward crotonobetaine and gamma-butyrobetaine. The sequence is that of Crotonobetaine/carnitine--CoA ligase from Escherichia coli O17:K52:H18 (strain UMN026 / ExPEC).